A 706-amino-acid polypeptide reads, in one-letter code: MNSLFASTARGLEELLKSELEALGAHDCKIVQGGVHFQGDDRLMYQSLLWSRLASRILLPLNEFKVYSDLDLYLGVQAIDWPSIFGVDKTFAVHFSGVNDEIRNSQYGALKVKDAIVDSFTRKMDQRPTVAKQQPDIRVNVFLQRDMASVALDLSGEGLHQRGYRDLTGQAPLKENLAAAIIQRSGWQPGTPMVDPMCGSGTLLIEAAMMASDRAPGLHRGHWGFTAWNAFNEALWRELTTEAQVRARRGLLETSSRFFGSDIDRRVIEMARANARRAGVAELITFNANDISKLVNPLPEGPVGTVISNPPYGERLESEPALIALHNMFGRMMKTAFGGWRLSLFSASPELLSCLQLRADREFKAKNGPLDCVQKNYQLTANPLGAGGALVAEDYANRLRKNVKKLDKWAKQQGIECYRLYDADLPDYNVAVDRYGSKVVVQEYAPPKTIDPQKARQRLFDVINATLAVLELPSNQLVLKTRERQKGKNQYEKLAQKGEFLLVSEYNAKLWVNLTDYLDTGLFLDHRIARQMLGKMSQGKDFLNLFAYTGTASVHAGLGGARSTTTVDMSRTYLEWAEKNLRVNGLTGQQHRLIQADCLSWLSNTDEQFDVIFIDPPTFSNSKRMETTFDVQRDHLVLMKELKWLLRRKGTIMFSNNKRGFQMDLAGIAALGLEAKEITALTQSEDFARNRQIHNCWLVTHSQEEK.

Residues 43–154 (LMYQSLLWSR…RDMASVALDL (112 aa)) form the THUMP domain.

Belongs to the methyltransferase superfamily. RlmKL family.

It is found in the cytoplasm. It carries out the reaction guanosine(2445) in 23S rRNA + S-adenosyl-L-methionine = N(2)-methylguanosine(2445) in 23S rRNA + S-adenosyl-L-homocysteine + H(+). The catalysed reaction is guanosine(2069) in 23S rRNA + S-adenosyl-L-methionine = N(2)-methylguanosine(2069) in 23S rRNA + S-adenosyl-L-homocysteine + H(+). Specifically methylates the guanine in position 2445 (m2G2445) and the guanine in position 2069 (m7G2069) of 23S rRNA. The sequence is that of Ribosomal RNA large subunit methyltransferase K/L from Yersinia pestis (strain Pestoides F).